The primary structure comprises 178 residues: Imidazoleglycerol-phosphate dehydratase (178 aa).

It belongs to the imidazoleglycerol-phosphate dehydratase family.

The protein localises to the cytoplasm. The enzyme catalyses D-erythro-1-(imidazol-4-yl)glycerol 3-phosphate = 3-(imidazol-4-yl)-2-oxopropyl phosphate + H2O. The protein operates within amino-acid biosynthesis; L-histidine biosynthesis; L-histidine from 5-phospho-alpha-D-ribose 1-diphosphate: step 6/9. This chain is Imidazoleglycerol-phosphate dehydratase, found in Archaeoglobus fulgidus (strain ATCC 49558 / DSM 4304 / JCM 9628 / NBRC 100126 / VC-16).